The chain runs to 102 residues: Large ribosomal subunit protein P1 (102 aa).

The disordered stretch occupies residues 69 to 91; that stretch reads APAAAAEEKKEEEKKEEKKEEDT. A compositionally biased stretch (basic and acidic residues) spans 74-90; sequence AEEKKEEEKKEEKKEED.

It belongs to the eukaryotic ribosomal protein P1/P2 family. Part of the 50S ribosomal subunit. Homodimer, it forms part of the ribosomal stalk which helps the ribosome interact with GTP-bound translation factors. Forms a heptameric uL10/P0(P1)2(P1)2(P1)2 complex, where uL10/P0 forms an elongated spine to which the P1 dimers bind in a sequential fashion.

Forms part of the ribosomal stalk, playing a central role in the interaction of the ribosome with GTP-bound translation factors. The polypeptide is Large ribosomal subunit protein P1 (Methanocaldococcus jannaschii (strain ATCC 43067 / DSM 2661 / JAL-1 / JCM 10045 / NBRC 100440) (Methanococcus jannaschii)).